Reading from the N-terminus, the 472-residue chain is Peptidoglycan endopeptidase RipA (472 aa).

The segment at residues M1 to A39 is a signal peptide (tat-type signal). The 133-residue stretch at R340–Y472 folds into the NlpC/P60 domain. The Nucleophile role is filled by C383. The active-site Proton acceptor is the H432. The active site involves E444.

It belongs to the peptidase C40 family. Monomer. Interacts with RpfB and PBP1A (ponA1) via residues 448-472 of RipA, interacts with RpfE. Interacts with the chaperone MoxR1. RipA-MoxR1 interaction in the cytoplasm leads to proper folding of RipA, resulting in its secretion. Also interacts with Mce2B. Post-translationally, exported by the Tat system. The position of the signal peptide cleavage has not been experimentally proven.

The protein resides in the secreted. MoxR1-mediated folding is critical for secretion via the TAT system. The synergistic effects on peptidoglycan degradation of RipA plus RpfB are inhibited by addition of PBP1A (ponA1). Functionally, peptidoglycan endopeptidase that cleaves the bond between D-glutamate and meso-diaminopimelate. Binds and degrades high-molecular weight peptidoglycan from a number of Actinobacteria; activity is increased in the presence of RpfB and inhibited by PBP1A (ponA1). Required for normal separation of daughter cells after cell division and for cell wall integrity. Required for host cell invasion and intracellular survival in host macrophages. This chain is Peptidoglycan endopeptidase RipA (ripA), found in Mycobacterium tuberculosis (strain ATCC 25618 / H37Rv).